A 90-amino-acid chain; its full sequence is Sec-independent protein translocase protein TatA (90 aa).

The helical transmembrane segment at 1–21 threads the bilayer; that stretch reads MGSMSIWHWVIVAVIVMLLFG. The interval 44 to 90 is disordered; it reads AEDETPPAVQAAPPPAEPVRTIPHATETSPGTAIPASHLPGGERKPV.

This sequence belongs to the TatA/E family. As to quaternary structure, the Tat system comprises two distinct complexes: a TatABC complex, containing multiple copies of TatA, TatB and TatC subunits, and a separate TatA complex, containing only TatA subunits. Substrates initially bind to the TatABC complex, which probably triggers association of the separate TatA complex to form the active translocon.

It localises to the cell inner membrane. Part of the twin-arginine translocation (Tat) system that transports large folded proteins containing a characteristic twin-arginine motif in their signal peptide across membranes. TatA could form the protein-conducting channel of the Tat system. This Methylobacterium radiotolerans (strain ATCC 27329 / DSM 1819 / JCM 2831 / NBRC 15690 / NCIMB 10815 / 0-1) protein is Sec-independent protein translocase protein TatA.